Here is a 452-residue protein sequence, read N- to C-terminus: UDP-N-acetylmuramoylalanine--D-glutamate ligase (452 aa).

ATP is bound at residue 119–125; the sequence is GSNGKTT.

Belongs to the MurCDEF family.

The protein localises to the cytoplasm. It carries out the reaction UDP-N-acetyl-alpha-D-muramoyl-L-alanine + D-glutamate + ATP = UDP-N-acetyl-alpha-D-muramoyl-L-alanyl-D-glutamate + ADP + phosphate + H(+). The protein operates within cell wall biogenesis; peptidoglycan biosynthesis. Functionally, cell wall formation. Catalyzes the addition of glutamate to the nucleotide precursor UDP-N-acetylmuramoyl-L-alanine (UMA). The polypeptide is UDP-N-acetylmuramoylalanine--D-glutamate ligase (Streptococcus equi subsp. zooepidemicus (strain MGCS10565)).